The sequence spans 168 residues: MRYFYDTEFIEDGHTIELISIGVVAEDGREYYAVSTEFDPERAGSWVRTHVLPKLPPPASQLWRSRQQIRLDLEEFLRIDGTDSIELWAWVGAYDHVALCQLWGPMTALPPTVPRFTRELRQLWEDRGCPRMPPRPRDVHDALVDARDQLRRFRLITSTDDAGRGAAR.

A Mg(2+)-binding site is contributed by D6. Residues D6–F9 form an RNA binding region.

As to quaternary structure, homodimer. The cofactor is Mg(2+).

Exonuclease that cleaves single-stranded 3' overhangs of double-stranded RNA. The polypeptide is 3'-5' exoribonuclease MT2234.1 (Mycobacterium tuberculosis (strain CDC 1551 / Oshkosh)).